We begin with the raw amino-acid sequence, 370 residues long: F-box protein At1g66490 (370 aa).

The F-box domain occupies 1-46 (MRTISDLPVALVEEILSRVPLTSLSAVRSTCKTWNALSKTQIFGKT).

The sequence is that of F-box protein At1g66490 from Arabidopsis thaliana (Mouse-ear cress).